The primary structure comprises 386 residues: Methionine aminopeptidase 1 (386 aa).

Residue alanine 2 is modified to N-acetylalanine. The C6H2-type zinc finger occupies 6 to 59; it reads TRVCETDGCSSEAKLQCPTCIKLGIQGSYFCSQECFKGSWATHKLLHKKAKDEK. 8 residues coordinate Zn(2+): cysteine 9, cysteine 14, cysteine 22, cysteine 25, cysteine 36, cysteine 40, histidine 48, and histidine 52. Position 203 (histidine 203) interacts with a protein. The Zn(2+) site is built by aspartate 220, aspartate 231, and histidine 294. A protein is bound at residue histidine 301. Glutamate 327 and glutamate 358 together coordinate Zn(2+).

It belongs to the peptidase M24A family. Methionine aminopeptidase type 1 subfamily. In terms of assembly, associates with the 60S ribosomal subunit of the 80S translational complex. Zn(2+) serves as cofactor. Requires Co(2+) as cofactor. It depends on Mn(2+) as a cofactor. The cofactor is Fe(2+).

Its subcellular location is the cytoplasm. It catalyses the reaction Release of N-terminal amino acids, preferentially methionine, from peptides and arylamides.. Cotranslationally removes the N-terminal methionine from nascent proteins. The N-terminal methionine is often cleaved when the second residue in the primary sequence is small and uncharged (Met-Ala-, Cys, Gly, Pro, Ser, Thr, or Val). Required for normal progression through the cell cycle. This is Methionine aminopeptidase 1 (METAP1) from Homo sapiens (Human).